The following is a 21-amino-acid chain: Ocellatin-2 (21 aa).

Position 21 is an isoleucine amide (Ile-21).

Expressed by the skin dorsal glands.

The protein resides in the secreted. Functionally, has hemolytic activity against human erythrocytes and antibacterial activity against the Gram-negative bacterium E.coli. The polypeptide is Ocellatin-2 (Leptodactylus ocellatus (Argus frog)).